Reading from the N-terminus, the 664-residue chain is Lysophospholipase 1 (664 aa).

Positions 1-22 (MKLQSLLVSAAVLTSLTENVNA) are cleaved as a signal peptide. N-linked (GlcNAc...) asparagine glycosylation is found at N26, N33, N52, N78, N92, N123, N160, N170, N215, N277, N307, N345, N388, N459, N489, N513, N541, N565, and N582. A PLA2c domain is found at 35–586 (TCDDDINLVR…TNYCWNGTID (552 aa)). N634 carries the GPI-anchor amidated asparagine lipid modification. Residues 635 to 664 (AGNALVNYSNLNTNTFIGVLSVISAVFGLI) constitute a propeptide, removed in mature form.

The protein belongs to the lysophospholipase family.

It is found in the cell membrane. The catalysed reaction is a 1-acyl-sn-glycero-3-phosphocholine + H2O = sn-glycerol 3-phosphocholine + a fatty acid + H(+). It catalyses the reaction a 1-acyl-sn-glycero-3-phospho-(1D-myo-inositol) + H2O = sn-glycero-3-phospho-1D-myo-inositol + a fatty acid + H(+). The enzyme catalyses a 1-acyl-sn-glycero-3-phospho-L-serine + H2O = sn-glycero-3-phospho-L-serine + a fatty acid + H(+). It carries out the reaction a 1,2-diacyl-sn-glycero-3-phospho-(1D-myo-inositol) + 2 H2O = sn-glycero-3-phospho-1D-myo-inositol + 2 a carboxylate + 2 H(+). The catalysed reaction is a 1,2-diacyl-sn-glycero-3-phospho-L-serine + 2 H2O = sn-glycero-3-phospho-L-serine + 2 a carboxylate + 2 H(+). It catalyses the reaction 2 1-hexadecanoyl-sn-glycero-3-phosphocholine = 1,2-dihexadecanoyl-sn-glycero-3-phosphocholine + sn-glycerol 3-phosphocholine. The enzyme catalyses 1-hexadecanoyl-sn-glycero-3-phosphocholine + H2O = sn-glycerol 3-phosphocholine + hexadecanoate + H(+). It carries out the reaction 1,2-dihexadecanoyl-sn-glycero-3-phosphocholine + H2O = 1-hexadecanoyl-sn-glycero-3-phosphocholine + hexadecanoate + H(+). In terms of biological role, sequentially removes both fatty acyl groups from diacylglycerophospholipids and therefore has both phospholipase B and lysophospholipase activities. It also displays transacylase activity. Substrate preference is phosphatidylserine &gt; phosphatidylinositol &gt;&gt; phosphatidylcholine &gt; phosphatidylethanolamine. The substrate specificity is pH- and ion-dependent. In contrast with activities observed at optimum pH 3.5, the order of substrate preference at pH 5.5 is phosphatidylcholine = phosphatidylethanolamine &gt;&gt; phosphatidylinositol. Degrades predominantly phosphatidylcholine and to some extent phosphatidylinositol in vivo. The chain is Lysophospholipase 1 from Saccharomyces cerevisiae (strain ATCC 204508 / S288c) (Baker's yeast).